Consider the following 399-residue polypeptide: MPKETPSKAAADALSDLEIKDSKSNLNKELETLREENRVKSDMLKEKLSKDAENHKAYLKSHQVHRHKLKEMEKEEPLLNEDKERTVLFPIKYHEIWQAYKRAEASFWTAEEIDLSKDIHDWNNRMNENERFFISRVLAFFAASDGIVNENLVENFSTEVQIPEAKSFYGFQIMIENIHSETYSLLIDTYIKDPKESEFLFNAIHTIPEIGEKAEWALRWIQDADALFGERLVAFASIEGVFFSGSFASIFWLKKRGMMPGLTFSNELICRDEGLHTDFACLLFAHLKNKPDPAIVEKIVTEAVEIEQRYFLDALPVALLGMNADLMNQYVEFVADRLLVAFGNKKYYKVENPFDFMENISLAGKTNFFEKRVSDYQKAGVMSKSTKQEAGAFTFNEDF.

3 positions are modified to phosphoserine: Ser15, Ser24, and Ser41. Asp145, Glu176, and His179 together coordinate Fe cation. The active site involves Tyr183. The Fe cation site is built by Glu239, Glu273, and His276.

This sequence belongs to the ribonucleoside diphosphate reductase small chain family. As to quaternary structure, heterotetramer of two large (R1) and two small (R2) subunits. S.cerevisiae has two different R1 subunits (RNR1 and RNR3) and two different R2 subunits (RNR2 and RNR4). The functional form of the small subunits is a RNR2-RNR4 heterodimer, where RNR2 provides the iron-radical center and RNR4 is required for proper folding of RNR2 and assembly with the large subunits. Under normal growth conditions, the active form of the large subunits is a homodimer of the constitutively expressed RNR1. In damaged cells or cells arrested for DNA synthesis, the reductase consists of multiple species because of the association of the small subunits (RNR2-RNR4) with either the RNR1 homodimer or a heterodimer of RNR1 and the damage-inducible RNR3. Interacts with DIF1. Fe cation serves as cofactor.

It localises to the nucleus. The enzyme catalyses a 2'-deoxyribonucleoside 5'-diphosphate + [thioredoxin]-disulfide + H2O = a ribonucleoside 5'-diphosphate + [thioredoxin]-dithiol. In terms of biological role, provides the precursors necessary for DNA synthesis. Catalyzes the biosynthesis of deoxyribonucleotides from the corresponding ribonucleotides. RNR2 provides the diiron-tyrosyl radical center. This Saccharomyces cerevisiae (strain ATCC 204508 / S288c) (Baker's yeast) protein is Ribonucleoside-diphosphate reductase small chain 1 (RNR2).